We begin with the raw amino-acid sequence, 388 residues long: MKTLLYWGWSSLAGLILFSILAHGEMKTFNESNGTNANVLMVGLTLVQAAAAKGAVCLDGSVPGYHLCRGYGSGANNWIIQLQGGAWCDSIQNCQSRKGSGYGSSTLMEKELAFLGLLSNKAAENPDFYNWNKVKVRYCDGASFDGDSENKAAQLQYRGKRIFLAVMEDLMEKGMRQAKQALLSGCSSGGLSAILRCDDFNNLFPPTTTVKCMSDAGFFLDAVDVSGGHSLRRMYSGVVNTQGLQNTLPPTCTSHIKPFLCFFPQYIINQVKTPLFILNSGFDSWQIGNSLAPPSADKSGSWHNCSFSFRCTASQMHFLEGFKMSMLDALKTFSKFSKNGVLITSGWAHCQAERQDTWFPGYSGAGKAKGIAVAVGDWYFERTKQNSS.

The N-terminal stretch at 1-24 (MKTLLYWGWSSLAGLILFSILAHG) is a signal peptide. N-linked (GlcNAc...) asparagine glycosylation is found at N30 and N33. Active-site charge relay system residues include S187 and D283. The N-linked (GlcNAc...) asparagine glycan is linked to N304. H349 (charge relay system) is an active-site residue.

This sequence belongs to the pectinacetylesterase family.

Its subcellular location is the secreted. The protein localises to the cell wall. Functionally, hydrolyzes acetyl esters in homogalacturonan regions of pectin. In type I primary cell wall, galacturonic acid residues of pectin can be acetylated at the O-2 and O-3 positions. Decreasing the degree of acetylation of pectin gels in vitro alters their physical properties. This chain is Pectin acetylesterase 1, found in Arabidopsis thaliana (Mouse-ear cress).